The sequence spans 206 residues: Imidazole glycerol phosphate synthase subunit HisH (206 aa).

In terms of domain architecture, Glutamine amidotransferase type-1 spans Met-1–Met-206. The Nucleophile role is filled by Cys-79. Active-site residues include His-188 and Glu-190.

Heterodimer of HisH and HisF.

It is found in the cytoplasm. It carries out the reaction 5-[(5-phospho-1-deoxy-D-ribulos-1-ylimino)methylamino]-1-(5-phospho-beta-D-ribosyl)imidazole-4-carboxamide + L-glutamine = D-erythro-1-(imidazol-4-yl)glycerol 3-phosphate + 5-amino-1-(5-phospho-beta-D-ribosyl)imidazole-4-carboxamide + L-glutamate + H(+). The catalysed reaction is L-glutamine + H2O = L-glutamate + NH4(+). The protein operates within amino-acid biosynthesis; L-histidine biosynthesis; L-histidine from 5-phospho-alpha-D-ribose 1-diphosphate: step 5/9. In terms of biological role, IGPS catalyzes the conversion of PRFAR and glutamine to IGP, AICAR and glutamate. The HisH subunit catalyzes the hydrolysis of glutamine to glutamate and ammonia as part of the synthesis of IGP and AICAR. The resulting ammonia molecule is channeled to the active site of HisF. The sequence is that of Imidazole glycerol phosphate synthase subunit HisH from Syntrophotalea carbinolica (strain DSM 2380 / NBRC 103641 / GraBd1) (Pelobacter carbinolicus).